We begin with the raw amino-acid sequence, 311 residues long: Probable manganese-dependent inorganic pyrophosphatase (311 aa).

Mn(2+) is bound by residues His-9, Asp-13, Asp-15, Asp-75, His-97, and Asp-149.

It belongs to the PPase class C family. It depends on Mn(2+) as a cofactor.

The protein resides in the cytoplasm. The enzyme catalyses diphosphate + H2O = 2 phosphate + H(+). The sequence is that of Probable manganese-dependent inorganic pyrophosphatase from Lactobacillus delbrueckii subsp. bulgaricus (strain ATCC BAA-365 / Lb-18).